Here is a 178-residue protein sequence, read N- to C-terminus: Ribosome maturation factor RimM (178 aa).

Positions 101–178 constitute a PRC barrel domain; the sequence is ADEYYWYQLV…VMRVEWDADF (78 aa).

It belongs to the RimM family. In terms of assembly, binds ribosomal protein uS19.

The protein localises to the cytoplasm. Functionally, an accessory protein needed during the final step in the assembly of 30S ribosomal subunit, possibly for assembly of the head region. Essential for efficient processing of 16S rRNA. May be needed both before and after RbfA during the maturation of 16S rRNA. It has affinity for free ribosomal 30S subunits but not for 70S ribosomes. The protein is Ribosome maturation factor RimM of Pseudomonas putida (strain ATCC 700007 / DSM 6899 / JCM 31910 / BCRC 17059 / LMG 24140 / F1).